Consider the following 213-residue polypeptide: ER lumen protein-retaining receptor (213 aa).

Topologically, residues 1-2 are lumenal; it reads MN. The helical transmembrane segment at 3 to 21 threads the bilayer; sequence IFRITADLAHAVAIVILLL. Over 22 to 35 the chain is Cytoplasmic; sequence KIWKSRSCEGISGR. A helical membrane pass occupies residues 36–53; the sequence is SQILFAVTFFTRYLDLFT. At 54 to 61 the chain is on the lumenal side; the sequence is SFYSLYNT. The helical transmembrane segment at 62–80 threads the bilayer; it reads VMKVLFLAGSIGTVYLMWV. The Cytoplasmic segment spans residues 81–96; the sequence is KFKATYDRNNDTFRIE. Residues 97 to 110 traverse the membrane as a helical segment; it reads FLVIPSIILALIIN. At 111–117 the chain is on the lumenal side; that stretch reads HEFMFME. Residues 118-137 form a helical membrane-spanning segment; it reads VMWTFSIYLEAVAIMPQLFM. At 138-149 the chain is on the cytoplasmic side; the sequence is LSRTGNAETITA. A helical membrane pass occupies residues 150-168; it reads HYLFALGSYRFLYIFNWVY. Residues 169-178 are Lumenal-facing; the sequence is RYYTESFFDP. Residues 179-199 form a helical membrane-spanning segment; that stretch reads IAVVAGIVQTVLYADFFYLYI. Residues 200 to 213 lie on the Cytoplasmic side of the membrane; it reads TRVIQSNRQFEMSA.

The protein belongs to the ERD2 family.

It is found in the endoplasmic reticulum membrane. Functionally, required for the retention of luminal endoplasmic reticulum proteins. Determines the specificity of the luminal ER protein retention system. Also required for normal vesicular traffic through the Golgi. This Caenorhabditis briggsae protein is ER lumen protein-retaining receptor (erd-2.1).